Here is a 66-residue protein sequence, read N- to C-terminus: Large ribosomal subunit protein bL33c (66 aa).

Belongs to the bacterial ribosomal protein bL33 family.

The protein resides in the plastid. It localises to the chloroplast. In Lobularia maritima (Sweet alyssum), this protein is Large ribosomal subunit protein bL33c.